We begin with the raw amino-acid sequence, 227 residues long: Flagellar L-ring protein 2 (227 aa).

An N-terminal signal peptide occupies residues methionine 1 to alanine 17. Residue cysteine 18 is the site of N-palmitoyl cysteine attachment. Residue cysteine 18 is the site of S-diacylglycerol cysteine attachment.

Belongs to the FlgH family. In terms of assembly, the basal body constitutes a major portion of the flagellar organelle and consists of four rings (L,P,S, and M) mounted on a central rod.

It is found in the cell outer membrane. The protein resides in the bacterial flagellum basal body. Its function is as follows. Assembles around the rod to form the L-ring and probably protects the motor/basal body from shearing forces during rotation. The chain is Flagellar L-ring protein 2 from Chromobacterium violaceum (strain ATCC 12472 / DSM 30191 / JCM 1249 / CCUG 213 / NBRC 12614 / NCIMB 9131 / NCTC 9757 / MK).